Consider the following 258-residue polypeptide: Deoxyribose-phosphate aldolase (258 aa).

Aspartate 101 serves as the catalytic Proton donor/acceptor. The Schiff-base intermediate with acetaldehyde role is filled by lysine 166. The Proton donor/acceptor role is filled by lysine 200.

This sequence belongs to the DeoC/FbaB aldolase family. DeoC type 2 subfamily.

Its subcellular location is the cytoplasm. It carries out the reaction 2-deoxy-D-ribose 5-phosphate = D-glyceraldehyde 3-phosphate + acetaldehyde. Its pathway is carbohydrate degradation; 2-deoxy-D-ribose 1-phosphate degradation; D-glyceraldehyde 3-phosphate and acetaldehyde from 2-deoxy-alpha-D-ribose 1-phosphate: step 2/2. Its function is as follows. Catalyzes a reversible aldol reaction between acetaldehyde and D-glyceraldehyde 3-phosphate to generate 2-deoxy-D-ribose 5-phosphate. This is Deoxyribose-phosphate aldolase from Actinobacillus pleuropneumoniae serotype 3 (strain JL03).